A 344-amino-acid chain; its full sequence is Cathepsin B-like cysteine proteinase 5 (344 aa).

Positions 1–15 are cleaved as a signal peptide; that stretch reads MWKLSAILLVAAASA. A propeptide spanning residues 16-81 is cleaved from the precursor; that stretch reads VVIPGHREAP…DIVATEVSDA (66 aa). 6 disulfide bridges follow: cysteine 95/cysteine 124, cysteine 107/cysteine 154, cysteine 143/cysteine 213, cysteine 144/cysteine 150, cysteine 183/cysteine 217, and cysteine 191/cysteine 203. The active site involves cysteine 110. Catalysis depends on residues histidine 286 and asparagine 306.

The protein belongs to the peptidase C1 family.

The polypeptide is Cathepsin B-like cysteine proteinase 5 (cpr-5) (Caenorhabditis elegans).